The chain runs to 5104 residues: MSRFSCIFPTLTDGYVPNPDHTRAAGRRTYTIDLSGWKAPGSEKESHILAAWALVLSSYVGTDEVAFYVVPVTGPDTTALAELKVEGDMSRQSLTCAAEQLLHPALVGAGQVSRETANTIITFANDIESLFVTQTEESFLSLQVYRNEQGHISLSLVYYLSLLTDAQAANVGTAMAQALAEVGTCDNDRLIKDLNLMSPAHLEHIWRFNANVPGIWEECFHDVIERHAVNRPHSLAVDAWDTKLTYADLVREARLLAAYLQQRGVRPGSVVPISFERSGAALVAMLAVSKAGGAFVSVPPNLPAGRLDAILDVIEAPFVVTWTKYESFWAERLPTLPIDNYPKPAADATVEALGKPEDLFYVIFTSGSTGRPKGCMLSHSNWLNGALRNAPSWKYGPQSRVLQMLSHTFDMSLLEICTSLGSGACVCVPRTEEIETSISDAINRWQVNHVIMTPSLARALRPDDVPGLKTMCLGGEAFPKEIVTMWSERINLWQFYGPSECSINSSSRPITRPDADPLNIGPPNSAACWVVDVQDYNKLVPVGAIGELLVSGPIVGMGYLKNPVKTAEAFLDEVEFVAKDDPQFGGFRFYRTGDLVRWNSDGTITFCGRADTQVKLNGQRLELAEVEYQLGLEAGVQYAIAMAPQAGLCKNNLLAILTVKGTSTGNQDTAADEIPLLDRRDPIVQETVKKLRSQLQHALPRYMVPTIWAFVGRLPMSASGKIDRVQLRDWVQKMSQETFDAITGRSLEAEGHVLGLSRLEQEIQLAWAEALGLSAAEVGLQQPFVALGGDSIKALDAVARCRACQIKISMVHILSCEGVREAASLAEVQETPAQQVAEMAVDYSNLWTRLSNDYDLGKLGVTRVDEVEDVFPCTTMQEGMFLGQIRRPGAYHMRFFHRVQLKGGCLPTVERIQQAWASLVERHPSLRTVFVDDLSPEAIYHSIVLRSVPMELRMREVPRDLSAEAALAMFTEELVPFRANAPLHRMLLLTCRGRVPYLMLEISHVIMDGYALSVFRREFIRACSSSPPLPRGPDYRMFANYHRTRQTDESTGYWTNYLADCVPCHIPTHAVSAPSDAPPEWPRTLQRRDFGVDNSAAFLQRCKERQVTLACAIRAAWALVLRAYTQSKDVCFGYVSSGRNVPVPEVEAIFGLCLSMQVCRARLSEASTIASLARRIQEDYVASLPFQHYPLAEAQRGLKQTHGQGLFNTAISMEWVPPSVEDEDALLDLEEIREQDDPTEYDIAISVDVHEGHIKLGFLYWPNLTDFEITHLAEALRGAMNCFAFQPDGALNTLSLLQASDVCSALADGPTLLPLEAVRGNAVSMIDRWVTRQPEGAAIDGWDGSLSYKELHEQSSWVARNLLHQGVQLGDRVLVCADRSSRTVAIVLGIVRAGCVLVLSNPTDPEKRLQWLAKKCDAALVVADPTYEERFATSGSRILSTTSVCAPAAWDYEFPALDEHDLISILFTSGSTGTPKGILMEHGALATSVLLGHGRTLRFSRHTRMLHFASLTFDAALAEIFTTLAHGGCICVPCEEDRLSDVPGCISSFAVNTAMLTPSVGRLLDPGALPTLKTLIMVGEPMSRLDVERFAPVLDLYNGAGPTETSIMVTIAGPMKPTDEPVNLGFAVAGVRLWVTEAENPNRLAPLGAVGELIVEGRLVTRGYLDDPARTQEAFLPTLPWLPSQHALYRTGDLVRYAEDGSLRYMGRKDTQVKLRGQRIELQEVEYHLRKSLQQAQIVVEMVVPAGKMRAQASLVAFVSGLTAADVESSSACNFGGTIPISQIVLSKSTFQALGEVLPRHMIPSVYYALDTIPLSLNGKADRRRLREMGSALLASSAAHKNTIEGMRESVKWTPASELERTLLELWAATLALDAETIHGDDSFFELGGDSVSAMKLVATARDKFKLSLSVPQMFRYPTIRQLAAEFGGPAGQSASSASSTTEERFTFSTPDDSSTNDGVDDDFLQLATAQLAQLAQEKGKKVDIAALLKQLQGGSFTNKTPSVSSSSSSSSSSEKKKKAAKVDSQAEAAAPVPVQFSLLDGGAEFLEKVREQAVEQCKVPHEDIEDIYPATPLQEGMMALTARTPGVYTTTLTCDLSEEVDLARLHYAWGKAAEAHPILRTRLILTDNNTAVQVVQRAEELPWDTYSLHDGDVLPDLTSNMTFGSPLLRLAVVHRQNQPRMLLVAIHHALYDGWSMPLLKQAVEDAYHGRDLRPQPFTPFIEYVIVGKQAAQDFWTTHLDSFAGGVFPNFPSIDYQINPTERRTRSMTLPTVTPRAQYTMATKIQAAWAVTVSRYAEANDIVFGTVSTGRSAPVPAIDRMVGPTITTVPVRISLSNQAERVNSLLQRVQDDSWKKMDHGHLGLQHIRRLGESAAAACSFQTLLVIQPREQPDTKYRSTLLSGLQDVAELKGVDTYPLMLVCEPDGARLHLTAVFDPAVLNGITLERMLAHWELVLIQLWNEPDMAVIELDTVSYSDKEALMRWNTGETIPNGCAHDAVSEWSVRTPHAPAVCAWDGEWTYEELERCSSLIASQILAHGVSSGDFVALYHEKSRWAAAGILAVFKAGAILITLDPAHPTDRIKDILDQARPRLILTSQSLLDVARNFETPLLSVQFAASKPLPEGWSSLPTISSTQAAYTPFTSGSTGRPKGIPLDHRGLAASTASIARSCLLRPASRVLHFASFAFDASMMEHLIAWHAGGCLCIPDDTARQTDLAKCIRGFNVTWAFLTPSCLRLITPDDVPSLQALGLGGESMTSEDITIWGPRLRQIVQLYGPAECCIVAALTPVTKPSENRLIGRPNACRCWVVDSQNLDRMAPIGAVGELVIEGITVGRGYINDPDRTNRAFIRHPKWLQTLYPDDQESKRLYRTGDLVRYAGVDGKLVFIGRRDGQLKLHGQRIELADVEAHLRPLIPGTQKVVVEMVHSADNQNPILAAFLEEMSASQKPTEREVGLLHPSQSQCDQDVKAIDSALSRTVPQYMIPSMYLHISRLPLSASGKLNRRHLREMVAELPRQRLNEYAAGSGLSAPDRPVTSQEREMRAIWARVLSLDPNTIGVNDDFFRIGGDSISGMQVATKCNAAGIHITSADLFRHRNIEQLICHLNTIRTTNCASVSLPTEPVDKWVALAPIQQLFFEVAPEGPNHFNQSLLLHTSRRVSVEELARGLDILVGRHSMLRARFCRKDSGQWFQQVKSLDYEPASGLYRLAAHNQITRESLPTLFTAAQMALSIQDGPLLNVDLVELEDGSQLVYLVAHHLIIDLVSWRILHGELEEYLQTGSLSSATGSVPFLTWSQLQAQYSAEDLTPARALPDFQEANDDFDVTRYWGISSELNTFGQTSISRFTLDRTVTDILFGNANKVMDTRPVEILQAALWYSCNQALTDRPRPSIYVEGHGREPWTDSINVSGTVGWFTTMSPLVSTPWDHLSRKPMRDFVDALSYIKDQRRRIPANGWAYFTSRYLNDEGRIAYGRTKPVVEFLFNYMGQYQEMNRDDAILQLAGDDIQSGTGASDIADNVPRFSLIDVSAFTANGCLTFEFIFPELLQQDARLEQCIKECERTLVAAASSLSEEGPRKTLTDFPLMSALTYDQLSQCLNHALPSIGLRAQDVLNIYPCSPVQQGMLLAQLRDRQAYQQRFRFRIKSQGPTDQLTLKKVKDAWTQVINRHDILRTLLLPVSDHSHFDQVVMVPGSLQHLVRISGTDANPTKDLSHTINITSDSSGTIICEWNVSHALVDAMSIAVIQREVDQELEGALGQHQAPPQYVDYIQWLSLKDNTEAQAYWQRYLKGVEPCLFPKLTSSSEVNPEGTISAIRATWTRDARMDELCHKHAITLTNIFHIVWAVVLGAYVGTDEVCFGYTTLGRDVPVDGVETMVGPLVNVLATTVHLQQDRSILNALLTHQSHLTNSLQHQHHALADVYSSLGLVGSQLFNTIVSLQDMSHFDAPDEQRTRLEMLPANDVSEYNVTLNIGVDQSSIQLVCSYQSASLSAEHANALLRTASHVLREILRDPTQEFCELEVISPECKEQLVKWNAGMLAPTDEYIHEKIQGQCRIHSSREAVCAWDGTFTYAEIDYLSSRLAARLISMGVTSEDIIPIYSPKSRWTVIAILGVLKTGAAFMLLETSHPVARLQAICDQVKTDMIITPASHAVSAANLAPILVVLDNITSSTQEKSDPLPAVGIPPAGEALAYLIFTSGSTGNPKGVMITHENLCSNASIITTSVNMTSDSRVLQFASHAFDGCILELLGALIAGACLIIPSESENKEDLAGCIERMDVTWALLTPSVARILKPETLPRLSNLVLGGEPIAASDLDMWRGHVQVVCAYGPTETTIVASTTSPSTFPADGKDIGLPNGSSLWIVDRWNYHKLSPLGATGELLIEGPNVSQGYLGDPEKTSNAFPDAPRWLSRLRKSPTRLYRTGDLARFDTSTGTIRFVGRKDNQIKFHGQRIELGEIEHHAQLAFSSASTVIVDLITPEQPQQPYIVAFVHQPDANTEATGTIDTILLPPSESFRADALAAQNKMHKRLPHYMVPAVFLPLHRLPLSATGKADRKRLRQCALALSSSELSAYRATASTKRMPSTAAERKMQDLVATVLGRGPAEIGMDDSFFYLGGDSVQAMRLVAEGRQQGLALSLRAIFDSPCLGDLSDQARSLIEDNQRISTASSAGLRDNCDQIDKIVATNSLNKTDVADVLPTTSFQRHWLDGQLKSYIVVDIPGPIDPARLFRAMHRVVEAHPILRVLFVPYETTTLQVILRTAAAIINADLSTTTVEDICRQDADAQVAPGVPYLRVILATQGQADHKIIMRLSHAQYDAVSLSLLMKDLSHAYANDTHPLPSSQFPRFNDYITYQQAQRADPMATTFWRNLLQDVPLTYLNLQPAEPSTSNGTPITLTRDIYIAAFPSLPNGITTATAVKAAWSLVLAQKSDSAAVIFGQVVHGRAIALPGVEGIVGPCANITPVVARLGLQTTGLDLMQSLQDQHRSAMPYEMVDLDDALAYTKKSEAGRKGLQTIVQHQNNVMVDDMEFSLGEVKCGVDVRAVDHVPKEVWVYSSVNEKRPGMLEVKIMSSTLVIGEEVAEELIGLLVEKIMGLLRHPEGVCLNGPC.

An adenylation 1 region spans residues 225–616 (ERHAVNRPHS…CGRADTQVKL (392 aa)). The Carrier 1 domain occupies 757–830 (SRLEQEIQLA…EAASLAEVQE (74 aa)). Residue serine 791 is modified to O-(pantetheine 4'-phosphoryl)serine. Positions 868 to 1299 (EDVFPCTTMQ…ALNTLSLLQA (432 aa)) are condensation 1. The segment at 1327–1716 (DRWVTRQPEG…GRKDTQVKLR (390 aa)) is adenylation 2. Positions 1854–1931 (TPASELERTL…QLAAEFGGPA (78 aa)) constitute a Carrier 2 domain. Serine 1891 carries the O-(pantetheine 4'-phosphoryl)serine modification. Disordered regions lie at residues 1928 to 1961 (GGPA…DGVD) and 1998 to 2025 (TNKT…KVDS). 2 stretches are compositionally biased toward low complexity: residues 1934–1958 (SASS…STND) and 2003–2013 (SVSSSSSSSSS). The segment at 2066–2481 (EDIYPATPLQ…TVSYSDKEAL (416 aa)) is condensation 2. The tract at residues 2504–2896 (VRTPHAPAVC…IGRRDGQLKL (393 aa)) is adenylation 3. The region spanning 3032 to 3108 (RPVTSQEREM…QLICHLNTIR (77 aa)) is the Carrier 3 domain. At serine 3069 the chain carries O-(pantetheine 4'-phosphoryl)serine. Condensation stretches follow at residues 3125 to 3590 (WVAL…TYDQ) and 3611 to 4029 (NIYP…EQLV). An adenylation 4 region spans residues 4054 to 4444 (HSSREAVCAW…VGRKDNQIKF (391 aa)). A Carrier 4 domain is found at 4578–4654 (MPSTAAERKM…DLSDQARSLI (77 aa)). At serine 4615 the chain carries O-(pantetheine 4'-phosphoryl)serine. Residues 4691 to 5018 (DVLPTTSFQR…LQTIVQHQNN (328 aa)) are condensation 5.

The protein belongs to the NRP synthetase family.

Its pathway is secondary metabolite biosynthesis. Its function is as follows. Nonribosomal peptide synthetase; part of the gene cluster that mediates the biosynthesis of malformins, cyclic pentapeptides with a disulfide bond between 2 consecutive cysteins, that show potential anti-tumor as well as antimalarial and antitrypanosomal properties. The nonribosomal peptide synthetase mlfA is responsible of the formation of the cyclic pentapeptide. The malformin biosynthesis clusters in malformin-producing fungi also contain enzymes involved in the formation of the disulfide bond between the two consecutive cysteins within malformins, in addition to additional tailoring enzymes such as methyltransferases or oxidoreductases. They are also composed of up to 4 major facilitator superfamily transporters, and transcription factors probably involved in the regulation of the expression of those clusters. The sequence is that of Malformin synthetase mlfA from Aspergillus vadensis (strain CBS 113365 / IMI 142717 / IBT 24658).